The following is a 117-amino-acid chain: MIYTEFTILYKSSLPKYLRIMYFTSIGIFFHKLSIVSLEIVSSKTVNDLEIKLSLSFAVYTAFIIISLYMINSGNVTLLYNLSNIFDSILFRYISNRLLLPIFTSSIFNISFSHSNL.

This is an uncharacterized protein from Fowlpox virus (strain NVSL) (FPV).